The primary structure comprises 99 residues: MLIMNLQLFAHKKGVGSSKNGRDSESKRLGVKSADGQFVLAGNILVRQRGTKIHPGENVGKGKDDTLFAKVDGVVKFERLGRDKKRASVYPVDVEAIAE.

The propeptide occupies 1 to 9; the sequence is MLIMNLQLF.

The protein belongs to the bacterial ribosomal protein bL27 family. Post-translationally, the N-terminus is cleaved by ribosomal processing cysteine protease Prp.

The polypeptide is Large ribosomal subunit protein bL27 (Clostridium beijerinckii (strain ATCC 51743 / NCIMB 8052) (Clostridium acetobutylicum)).